We begin with the raw amino-acid sequence, 255 residues long: Hydroxyacylglutathione hydrolase (255 aa).

H55, H57, D59, H60, H111, D131, and H169 together coordinate Zn(2+).

It belongs to the metallo-beta-lactamase superfamily. Glyoxalase II family. Monomer. The cofactor is Zn(2+).

The enzyme catalyses an S-(2-hydroxyacyl)glutathione + H2O = a 2-hydroxy carboxylate + glutathione + H(+). The protein operates within secondary metabolite metabolism; methylglyoxal degradation; (R)-lactate from methylglyoxal: step 2/2. In terms of biological role, thiolesterase that catalyzes the hydrolysis of S-D-lactoyl-glutathione to form glutathione and D-lactic acid. This chain is Hydroxyacylglutathione hydrolase, found in Chromohalobacter salexigens (strain ATCC BAA-138 / DSM 3043 / CIP 106854 / NCIMB 13768 / 1H11).